A 575-amino-acid polypeptide reads, in one-letter code: MNGPALQPSSPSSAPSASPAAAPRGWSEFCELHAVAAARELARQYWLFAREHPQHAPLRAELVSLQFTDLFQRYFCREVRDGRAPGRDYRDTGRGPPAKAEASPEPGPGPAAPGLPKARSSEELAPPRPPGPCSFQHFRRSLRHIFRRRSAGELPAAHTAAAPGTPGEAAETPARPGLAKKFLPWSLAREPPPEALKEAVLRYSLADEASMDSGARWQRGRLALRRAPGPDGPDRVLELFDPPKSSRPKLQAACSSIQEVRWCTRLEMPDNLYTFVLKVKDRTDIIFEVGDEQQLNSWMAELSECTGRGLESTEAEMHIPSALEPSTSSSPRGSTDSLNQGASPGGLLDPACQKTDHFLSCYPWFHGPISRVKAAQLVQLQGPDAHGVFLVRQSETRRGEYVLTFNFQGIAKHLRLSLTERGQCRVQHLHFPSVVDMLHHFQRSPIPLECGAACDVRLSSYVVVVSQPPGSCNTVLFPFSLPHWDSESLPHWGSELGLPHLSSSGCPRGLSPEGLPGRSSPPEQIFHLVPSPEELANSLQHLEHEPVNRARDSDYEMDSSSRSHLRAIDNQYTPL.

Disordered regions lie at residues 1–23, 83–136, and 150–176; these read MNGP…AAAP, RAPG…CSFQ, and SAGE…PARP. Residue serine 13 is modified to Phosphoserine. Basic and acidic residues predominate over residues 83-93; sequence RAPGRDYRDTG. The span at 95–104 shows a compositional bias: low complexity; sequence GPPAKAEASP. Serine 103, serine 120, and serine 150 each carry phosphoserine. A compositionally biased stretch (low complexity) spans 152 to 174; that stretch reads GELPAAHTAAAPGTPGEAAETPA. The PH domain occupies 194-307; the sequence is EALKEAVLRY…WMAELSECTG (114 aa). Residues 322 to 346 form a disordered region; that stretch reads ALEPSTSSSPRGSTDSLNQGASPGG. Positions 325 to 337 are enriched in low complexity; sequence PSTSSSPRGSTDS. At serine 330 the chain carries Phosphoserine. Residues 364 to 462 form the SH2 domain; sequence WFHGPISRVK…ACDVRLSSYV (99 aa). 2 disordered regions span residues 503–525 and 546–575; these read SSGC…PEQI and PVNR…YTPL.

It belongs to the SH2B adapter family. Binds to the tyrosine-phosphorylated TCR zeta chain via its SH2 domain. Post-translationally, tyrosine phosphorylated by LCK. As to expression, preferentially expressed by lymphoid cell lines.

Functionally, links T-cell receptor activation signal to phospholipase C-gamma-1, GRB2 and phosphatidylinositol 3-kinase. The protein is SH2B adapter protein 3 (SH2B3) of Homo sapiens (Human).